The sequence spans 833 residues: Bifunctional dethiobiotin synthetase/7,8-diamino-pelargonic acid aminotransferase, mitochondrial (833 aa).

The N-terminal 23 residues, Met1–Lys23, are a transit peptide targeting the mitochondrion. The dethiobiotin synthetase stretch occupies residues His36–Asp299. Ser47–Leu52 provides a ligand contact to ATP. Residue Thr51 coordinates Mg(2+). A substrate-binding site is contributed by Thr81. Asp88 is a binding site for Mg(2+). ATP contacts are provided by residues Asp97, Glu210–Gly213, and Glu270–Asp271. Glu210 serves as a coordination point for Mg(2+). The interval Arg332 to Phe830 is 7,8-diamino-pelargonic acid aminotransferase. Position 391-392 (Trp391–Trp392) interacts with (8S)-8-amino-7-oxononanoate. Pyridoxal 5'-phosphate is bound at residue Gly453 to Ser454. Tyr495 contacts (8S)-8-amino-7-oxononanoate. Residues Pro518 to Tyr520 and Glu545 contribute to the ATP site. Asp637 contacts pyridoxal 5'-phosphate. Positions 666 and 700 each coordinate (8S)-8-amino-7-oxononanoate. Position 666 is an N6-(pyridoxal phosphate)lysine (Lys666). His701–Ser702 contacts pyridoxal 5'-phosphate. Arg797 contacts (8S)-8-amino-7-oxononanoate.

It in the N-terminal section; belongs to the dethiobiotin synthetase family. This sequence in the C-terminal section; belongs to the class-III pyridoxal-phosphate-dependent aminotransferase family. BioA subfamily. As to quaternary structure, homodimer. Mg(2+) is required as a cofactor. It depends on pyridoxal 5'-phosphate as a cofactor.

The protein localises to the mitochondrion matrix. It carries out the reaction (7R,8S)-7,8-diammoniononanoate + CO2 + ATP = (4R,5S)-dethiobiotin + ADP + phosphate + 3 H(+). The enzyme catalyses (8S)-8-amino-7-oxononanoate + S-adenosyl-L-methionine = S-adenosyl-4-methylsulfanyl-2-oxobutanoate + (7R,8S)-7,8-diammoniononanoate. It functions in the pathway cofactor biosynthesis; biotin biosynthesis; biotin from 7,8-diaminononanoate: step 1/2. The protein operates within cofactor biosynthesis; biotin biosynthesis; 7,8-diaminononanoate from 8-amino-7-oxononanoate (SAM route): step 1/1. In terms of biological role, bifunctional enzyme that catalyzes two different reactions involved in the biotin biosynthesis. Functionally, catalyzes a mechanistically unusual reaction, the ATP-dependent insertion of CO2 between the N7 and N8 nitrogen atoms of 7,8-diaminopelargonic acid (DAPA) to form an ureido ring. Catalyzes the transfer of the alpha-amino group from S-adenosyl-L-methionine (SAM) to 7-keto-8-aminopelargonic acid (KAPA) to form 7,8-diaminopelargonic acid (DAPA). It is the only aminotransferase known to utilize SAM as an amino donor. The chain is Bifunctional dethiobiotin synthetase/7,8-diamino-pelargonic acid aminotransferase, mitochondrial from Arabidopsis thaliana (Mouse-ear cress).